Reading from the N-terminus, the 479-residue chain is ATP synthase subunit beta, chloroplastic (479 aa).

156 to 163 (GGAGVGKT) is an ATP binding site.

This sequence belongs to the ATPase alpha/beta chains family. In terms of assembly, F-type ATPases have 2 components, CF(1) - the catalytic core - and CF(0) - the membrane proton channel. CF(1) has five subunits: alpha(3), beta(3), gamma(1), delta(1), epsilon(1). CF(0) has four main subunits: a(1), b(1), b'(1) and c(9-12).

It is found in the plastid. It localises to the chloroplast thylakoid membrane. It carries out the reaction ATP + H2O + 4 H(+)(in) = ADP + phosphate + 5 H(+)(out). Its function is as follows. Produces ATP from ADP in the presence of a proton gradient across the membrane. The catalytic sites are hosted primarily by the beta subunits. The chain is ATP synthase subunit beta, chloroplastic from Trichomanes davallioides (Kilau fern).